Reading from the N-terminus, the 392-residue chain is Formate-dependent phosphoribosylglycinamide formyltransferase (392 aa).

Residues 20-21 and Glu-80 each bind N(1)-(5-phospho-beta-D-ribosyl)glycinamide; that span reads EL. ATP is bound by residues Arg-112, Lys-153, 158–163, 193–196, and Glu-201; these read SSGKGQ and EGFI. The ATP-grasp domain maps to 117–306; the sequence is RLAAETLALP…EFALHVRAIL (190 aa). Residues Glu-265 and Glu-277 each coordinate Mg(2+). N(1)-(5-phospho-beta-D-ribosyl)glycinamide-binding positions include Asp-284, Lys-354, and 361–362; that span reads RR.

Belongs to the PurK/PurT family. As to quaternary structure, homodimer.

It catalyses the reaction N(1)-(5-phospho-beta-D-ribosyl)glycinamide + formate + ATP = N(2)-formyl-N(1)-(5-phospho-beta-D-ribosyl)glycinamide + ADP + phosphate + H(+). The protein operates within purine metabolism; IMP biosynthesis via de novo pathway; N(2)-formyl-N(1)-(5-phospho-D-ribosyl)glycinamide from N(1)-(5-phospho-D-ribosyl)glycinamide (formate route): step 1/1. Its function is as follows. Involved in the de novo purine biosynthesis. Catalyzes the transfer of formate to 5-phospho-ribosyl-glycinamide (GAR), producing 5-phospho-ribosyl-N-formylglycinamide (FGAR). Formate is provided by PurU via hydrolysis of 10-formyl-tetrahydrofolate. This chain is Formate-dependent phosphoribosylglycinamide formyltransferase, found in Shewanella amazonensis (strain ATCC BAA-1098 / SB2B).